The chain runs to 2547 residues: Lovastatin diketide synthase mokB (2547 aa).

The Ketosynthase family 3 (KS3) domain occupies 10–430; the sequence is PTPIAVVGMG…GANAHAIVER (421 aa). Catalysis depends on for beta-ketoacyl synthase activity residues Cys-183, His-318, and His-353. The segment at 545-890 is acyl and malonyl transferase; that stretch reads VFTGQGAQWF…MDLLQGGYPV (346 aa). Catalysis depends on Ser-635, which acts as the For malonyltransferase activity. The N-terminal hotdog fold stretch occupies residues 941 to 1079; the sequence is HDLIGVQEPL…GLIRAQVDHP (139 aa). Residues 941 to 1252 form the PKS/mFAS DH domain; the sequence is HDLIGVQEPL…FQSLGAVISD (312 aa). His-973 acts as the Proton acceptor; for dehydratase activity in catalysis. Positions 973–985 are dehydratase-like; that stretch reads HVVGSRILFPGAG. The segment at 1095–1252 is C-terminal hotdog fold; that stretch reads SRKMAPQDLW…FQSLGAVISD (158 aa). Asp-1160 (proton donor; for dehydratase activity) is an active-site residue. Cysteines 1340 and 1379 form a disulfide. Residues 1510-1547 form a methyltransferase region; that stretch reads YDVVLACQVLHATSNMQRTLNNVRKLLKPGGKLILVET. A Carrier domain is found at 2459–2541; that stretch reads ASTEEEATAL…EVAEVVVKKY (83 aa). Ser-2501 is modified (O-(pantetheine 4'-phosphoryl)serine).

The cofactor is pantetheine 4'-phosphate.

It carries out the reaction holo-[2-methylbutanoate polyketide synthase] + 2 malonyl-CoA + S-adenosyl-L-methionine + 2 NADPH + 3 H(+) = (S)-2-methylbutanoyl-[2-methylbutanoate polyketide synthase] + S-adenosyl-L-homocysteine + 2 CO2 + 2 NADP(+) + 2 CoA + H2O. It participates in polyketide biosynthesis; lovastatin biosynthesis. Diketide synthase; part of the gene cluster that mediates the biosynthesis of monakolin K, also known as lovastatin, and which acts as a potent competitive inhibitor of HMG-CoA reductase. Monakolin K biosynthesis is performed in two stages. The first stage is catalyzed by the nonaketide synthase mokA, which belongs to type I polyketide synthases and catalyzes the iterative nine-step formation of the polyketide. This PKS stage completed by the action of dehydrogenase mokE, which catalyzes the NADPH-dependent reduction of the unsaturated tetra-, penta- and heptaketide intermediates that arise during the mokA-mediated biosynthesis of the nonaketide chain and leads to dihydromonacolin L. Covalently bound dihydromonacolin L is released from mokA by the mokD esterase. Conversion of dihydromonacolin L into monacolin L and then monacolin J is subsequently performed with the participation of molecular oxygen and P450 monoogygenase mokC. Finally, mokF performs the conversion of monacoline J to monacoline K through the addition of the side-chain diketide moiety (2R)-2-methylbutanoate produced by the diketide synthase mokB. This chain is Lovastatin diketide synthase mokB, found in Monascus pilosus (Red mold).